Consider the following 535-residue polypeptide: Light-independent protochlorophyllide reductase subunit B (535 aa).

Residue Asp36 participates in [4Fe-4S] cluster binding. The Proton donor role is filled by Asp292. Residue 428–429 (GL) coordinates substrate. The segment at 446–483 (DEASPSESAPHASNGHEDVAGGSTAQSVPSHAATEGDG) is disordered.

It belongs to the ChlB/BchB/BchZ family. As to quaternary structure, protochlorophyllide reductase is composed of three subunits; BchL, BchN and BchB. Forms a heterotetramer of two BchB and two BchN subunits. Requires [4Fe-4S] cluster as cofactor.

It catalyses the reaction chlorophyllide a + oxidized 2[4Fe-4S]-[ferredoxin] + 2 ADP + 2 phosphate = protochlorophyllide a + reduced 2[4Fe-4S]-[ferredoxin] + 2 ATP + 2 H2O. Its pathway is porphyrin-containing compound metabolism; bacteriochlorophyll biosynthesis (light-independent). Component of the dark-operative protochlorophyllide reductase (DPOR) that uses Mg-ATP and reduced ferredoxin to reduce ring D of protochlorophyllide (Pchlide) to form chlorophyllide a (Chlide). This reaction is light-independent. The NB-protein (BchN-BchB) is the catalytic component of the complex. This is Light-independent protochlorophyllide reductase subunit B from Chlorobium limicola (strain DSM 245 / NBRC 103803 / 6330).